We begin with the raw amino-acid sequence, 329 residues long: Anthranilate phosphoribosyltransferase (329 aa).

5-phospho-alpha-D-ribose 1-diphosphate is bound by residues Gly-78, 81–82, Thr-86, 88–91, 106–114, and Ser-118; these read GD, NLST, and KHGNRSASG. Gly-78 is a binding site for anthranilate. Residue Ser-90 participates in Mg(2+) binding. Asn-109 contributes to the anthranilate binding site. Residue Arg-164 participates in anthranilate binding. Mg(2+) contacts are provided by Asp-221 and Glu-222.

Belongs to the anthranilate phosphoribosyltransferase family. In terms of assembly, homodimer. The cofactor is Mg(2+).

It carries out the reaction N-(5-phospho-beta-D-ribosyl)anthranilate + diphosphate = 5-phospho-alpha-D-ribose 1-diphosphate + anthranilate. It functions in the pathway amino-acid biosynthesis; L-tryptophan biosynthesis; L-tryptophan from chorismate: step 2/5. Catalyzes the transfer of the phosphoribosyl group of 5-phosphorylribose-1-pyrophosphate (PRPP) to anthranilate to yield N-(5'-phosphoribosyl)-anthranilate (PRA). The sequence is that of Anthranilate phosphoribosyltransferase from Pyrobaculum islandicum (strain DSM 4184 / JCM 9189 / GEO3).